Consider the following 247-residue polypeptide: MAGHSKWANTKHRKAAQDAKRGKIFTKIIRELVTAARLGGGDPGANPRLRAAIDKALSNNMTRDTLNRAIARGVGGDEDNNMETIIYEGYGPGGTAVMVECLSDNRNRTVSEVRHAFTKTGGNLGTDGSVSYLFTKKGVISYAPGLEEDTVMDAALEAGADDIVVYDDGAIDVFTAWESLGAVKDVLDATGLVAEGAEVSLIPSTKAELDAETAPKLLRLIDMLEDSDDVQEVYHNGEISDEVAATL.

This sequence belongs to the TACO1 family.

It localises to the cytoplasm. The polypeptide is Probable transcriptional regulatory protein YPK_2146 (Yersinia pseudotuberculosis serotype O:3 (strain YPIII)).